The following is a 132-amino-acid chain: Mediator of RNA polymerase II transcription subunit 11 (132 aa).

This sequence belongs to the Mediator complex subunit 11 family. As to quaternary structure, component of the Mediator complex.

It is found in the nucleus. Its function is as follows. Component of the Mediator complex, a coactivator involved in the regulated transcription of nearly all RNA polymerase II-dependent genes. Mediator functions as a bridge to convey information from gene-specific regulatory proteins to the basal RNA polymerase II transcription machinery. Mediator is recruited to promoters by direct interactions with regulatory proteins and serves as a scaffold for theQ9P086 assembly of a functional pre-initiation complex with RNA polymerase II and the general transcription factors. This chain is Mediator of RNA polymerase II transcription subunit 11 (MED11), found in Aedes aegypti (Yellowfever mosquito).